Consider the following 361-residue polypeptide: Phospho-N-acetylmuramoyl-pentapeptide-transferase (361 aa).

The next 10 helical transmembrane spans lie at Ser-26–Gln-46, Thr-73–Leu-93, Val-98–Ile-118, Ile-139–Thr-159, Ile-168–Phe-188, Gly-200–Ser-220, Ala-237–Phe-257, Val-264–Ile-284, Leu-289–Val-309, and Val-339–Lys-359.

It belongs to the glycosyltransferase 4 family. MraY subfamily. The cofactor is Mg(2+).

It localises to the cell inner membrane. The enzyme catalyses UDP-N-acetyl-alpha-D-muramoyl-L-alanyl-gamma-D-glutamyl-meso-2,6-diaminopimeloyl-D-alanyl-D-alanine + di-trans,octa-cis-undecaprenyl phosphate = di-trans,octa-cis-undecaprenyl diphospho-N-acetyl-alpha-D-muramoyl-L-alanyl-D-glutamyl-meso-2,6-diaminopimeloyl-D-alanyl-D-alanine + UMP. Its pathway is cell wall biogenesis; peptidoglycan biosynthesis. Its function is as follows. Catalyzes the initial step of the lipid cycle reactions in the biosynthesis of the cell wall peptidoglycan: transfers peptidoglycan precursor phospho-MurNAc-pentapeptide from UDP-MurNAc-pentapeptide onto the lipid carrier undecaprenyl phosphate, yielding undecaprenyl-pyrophosphoryl-MurNAc-pentapeptide, known as lipid I. In Xylella fastidiosa (strain 9a5c), this protein is Phospho-N-acetylmuramoyl-pentapeptide-transferase.